We begin with the raw amino-acid sequence, 291 residues long: 33 kDa chaperonin (291 aa).

Disulfide bonds link cysteine 235/cysteine 237 and cysteine 268/cysteine 271.

Belongs to the HSP33 family. Under oxidizing conditions two disulfide bonds are formed involving the reactive cysteines. Under reducing conditions zinc is bound to the reactive cysteines and the protein is inactive.

It localises to the cytoplasm. Redox regulated molecular chaperone. Protects both thermally unfolding and oxidatively damaged proteins from irreversible aggregation. Plays an important role in the bacterial defense system toward oxidative stress. In Streptococcus agalactiae serotype Ia (strain ATCC 27591 / A909 / CDC SS700), this protein is 33 kDa chaperonin.